The chain runs to 555 residues: MADADGGSNLAVLDALDSARTQMYHMKAIVIAGMGFFTDAYDLFCISTVSKLLGRLYYQPDGSTDSKPGALSKTANNMVIGVALVGTLMGQLVFGYFGDKLGRKRVYGVTLILMAACAIGSGLSFGSSRKAVIGTLCFFRFWLGFGIGGDYPLSATIMSEYSNKKTRGAFIAAVFAMQGVGIIFAGLVSMIVSSIFLTYNKAPSYKGNHDLSRQMPAADYVWRIVLMIGAFPALATFYWRMKMPETARYTAIIDGNAKQAANDMQKVLSIEIEAEQEKLAKFNAANNYPLLSMEFARRHGLHLIGTTTTWFLLDIAFYSQNLTQKDIFPAMGLISGAAEVNALTEMFQISKASFLVALLGTFPGYWVTVALIDKMGRYMIQLIGFFMMSMFMLAMGILYDYLKTHHFLFGLLYALTFFFANFGPNSTTFVLPAELFPTRVRSTCHAISAAAGKAGAIVAAFGIQKLTYNSQVKSIKKALIILSITNMLGFFFTFLVPETMGRSLEEISGEDGNTGAGGGGAPAAANAGVGVSASDVSRDEKFPASSTEWQTSMHA.

Residues Met-1–Ala-28 lie on the Cytoplasmic side of the membrane. Residues Ile-29–Val-49 form a helical membrane-spanning segment. The Extracellular segment spans residues Ser-50–Asn-77. The helical transmembrane segment at Met-78–Gly-98 threads the bilayer. Residues Asp-99–Arg-105 are Cytoplasmic-facing. Residues Val-106–Gly-126 traverse the membrane as a helical segment. Residues Ser-127–Lys-130 are Extracellular-facing. A helical membrane pass occupies residues Ala-131–Tyr-151. Residues Pro-152–Arg-167 lie on the Cytoplasmic side of the membrane. A helical membrane pass occupies residues Gly-168 to Val-188. Residues Ser-189–Pro-216 lie on the Extracellular side of the membrane. A helical transmembrane segment spans residues Ala-217 to Phe-237. Over Tyr-238 to Arg-298 the chain is Cytoplasmic. A helical membrane pass occupies residues His-299 to Ser-319. The Extracellular segment spans residues Gln-320 to Lys-351. Residues Ala-352 to Ile-372 form a helical membrane-spanning segment. Topologically, residues Asp-373–Arg-377 are cytoplasmic. The helical transmembrane segment at Tyr-378 to Leu-398 threads the bilayer. Over Tyr-399 to Leu-408 the chain is Extracellular. Residues Phe-409–Phe-436 form a helical membrane-spanning segment. Topologically, residues Pro-437–Ser-442 are cytoplasmic. Residues Thr-443–Ile-463 form a helical membrane-spanning segment. Topologically, residues Gln-464–Lys-477 are extracellular. A helical transmembrane segment spans residues Ala-478 to Glu-498. Topologically, residues Thr-499–Ala-555 are cytoplasmic. The tract at residues Glu-506–Ala-555 is disordered. Over residues Gly-512–Ala-521 the composition is skewed to gly residues. Residues Pro-522–Asp-535 are compositionally biased toward low complexity. The span at Ala-544 to Ala-555 shows a compositional bias: polar residues.

Belongs to the major facilitator superfamily. Phosphate:H(+) symporter (TC 2.A.1.9) family.

Its subcellular location is the membrane. In terms of biological role, symbiosis-specific regulated inorganic phosphate (Pi) transporter. Probably involved in symbiosis-mediated Pi uptake in roots colonized by myccorhizal fungi. The sequence is that of Inorganic phosphate transporter 1-11 (PHT1-11) from Oryza sativa subsp. japonica (Rice).